The following is an 852-amino-acid chain: DNA mismatch repair protein MutS (852 aa).

602–609 (GPNMSGKS) is a binding site for ATP.

This sequence belongs to the DNA mismatch repair MutS family.

Functionally, this protein is involved in the repair of mismatches in DNA. It is possible that it carries out the mismatch recognition step. This protein has a weak ATPase activity. In Streptococcus thermophilus (strain ATCC BAA-250 / LMG 18311), this protein is DNA mismatch repair protein MutS.